We begin with the raw amino-acid sequence, 185 residues long: Ribosome-recycling factor (185 aa).

The protein belongs to the RRF family.

Its subcellular location is the cytoplasm. In terms of biological role, responsible for the release of ribosomes from messenger RNA at the termination of protein biosynthesis. May increase the efficiency of translation by recycling ribosomes from one round of translation to another. In Rhodospirillum centenum (strain ATCC 51521 / SW), this protein is Ribosome-recycling factor.